The chain runs to 578 residues: MTFSTENNKQIVLGEELGPLSDNERLKKQSNLLRGTIAEDLQDRITGGFTADNFQLIRFHGMYQQDDRDIRNERTKQKLEPLHNVMLRARMPGGIITPTQWLAIDKFATEHSLYGSIRLTTRQTFQFHGVLKPNIKLMHQTLNNIGIDSIATAGDVNRNVLCTTNPVESELHQEAYEWAKKISEHLLPKTRAYAEIWLDGEKVESTEEDEPILGKTYLPRKFKTTVVIPPQNDVDVHANDLNFVAIADNGKLVGFNVLVGGGLAMTHGDTSTYPRRADDFGFIPLEKTLDVAAAVVTTQRDWGNRSNRKNAKTKYTLDRVGTDVFKAEVEKRAGIQFEASRPYEFTERGDRIGWVEGIDGKFHLALFIENGRLLDYPGKPLKTGVAEIAKIHKGDFRMTANQNLIVAGVPKSEKAKIEKIAREHGLMDDNVSEQRKNSMACVAFPTCPLAMAEAERFLPQFVTDVEGILEKHGLPENDNIILRVTGCPNGCGRAMLAEIGLVGKAPGRYNLHLGGNRAGTRVPKMYKENITDKQILEEIDLLVARWSKEREEGEAFGDFTIRAGIIQEVFVSKRDFYA.

The [4Fe-4S] cluster site is built by C441, C447, C487, and C491. C491 contributes to the siroheme binding site.

This sequence belongs to the nitrite and sulfite reductase 4Fe-4S domain family. In terms of assembly, alpha(8)-beta(8). The alpha component is a flavoprotein, the beta component is a hemoprotein. The cofactor is siroheme. [4Fe-4S] cluster serves as cofactor.

It catalyses the reaction hydrogen sulfide + 3 NADP(+) + 3 H2O = sulfite + 3 NADPH + 4 H(+). Its pathway is sulfur metabolism; hydrogen sulfide biosynthesis; hydrogen sulfide from sulfite (NADPH route): step 1/1. Its function is as follows. Component of the sulfite reductase complex that catalyzes the 6-electron reduction of sulfite to sulfide. This is one of several activities required for the biosynthesis of L-cysteine from sulfate. This chain is Sulfite reductase [NADPH] hemoprotein beta-component, found in Vibrio parahaemolyticus serotype O3:K6 (strain RIMD 2210633).